Here is a 193-residue protein sequence, read N- to C-terminus: 3-isopropylmalate dehydratase small subunit (193 aa).

It belongs to the LeuD family. LeuD type 1 subfamily. As to quaternary structure, heterodimer of LeuC and LeuD.

The catalysed reaction is (2R,3S)-3-isopropylmalate = (2S)-2-isopropylmalate. Its pathway is amino-acid biosynthesis; L-leucine biosynthesis; L-leucine from 3-methyl-2-oxobutanoate: step 2/4. Catalyzes the isomerization between 2-isopropylmalate and 3-isopropylmalate, via the formation of 2-isopropylmaleate. In Listeria monocytogenes serotype 4b (strain CLIP80459), this protein is 3-isopropylmalate dehydratase small subunit.